A 38-amino-acid chain; its full sequence is Tyrosinase inhibitor (38 aa).

Intrachain disulfides connect C11–C25, C18–C29, and C24–C36. Position 32 is a 3',4'-dihydroxyphenylalanine (Y32).

In terms of assembly, monomer. Contains L-DOPA (3',4'-dihydroxyphenylalanine).

Its subcellular location is the secreted. Functionally, potent reversible, competitive inhibitor of tyrosinase (phenol oxidase) in the nanomolar range. In Musca domestica (House fly), this protein is Tyrosinase inhibitor.